Consider the following 303-residue polypeptide: Proteasome subunit beta (303 aa).

Residues 1 to 67 constitute a propeptide, removed in mature form; by autocatalysis; that stretch reads MTWQFPDRLS…SGGTGQLPHG (67 aa). T68 functions as the Nucleophile in the catalytic mechanism.

This sequence belongs to the peptidase T1B family. In terms of assembly, the 20S proteasome core is composed of 14 alpha and 14 beta subunits that assemble into four stacked heptameric rings, resulting in a barrel-shaped structure. The two inner rings, each composed of seven catalytic beta subunits, are sandwiched by two outer rings, each composed of seven alpha subunits. The catalytic chamber with the active sites is on the inside of the barrel. Has a gated structure, the ends of the cylinder being occluded by the N-termini of the alpha-subunits. Is capped by the proteasome-associated ATPase, ARC.

It localises to the cytoplasm. The enzyme catalyses Cleavage of peptide bonds with very broad specificity.. The protein operates within protein degradation; proteasomal Pup-dependent pathway. Its activity is regulated as follows. The formation of the proteasomal ATPase ARC-20S proteasome complex, likely via the docking of the C-termini of ARC into the intersubunit pockets in the alpha-rings, may trigger opening of the gate for substrate entry. Interconversion between the open-gate and close-gate conformations leads to a dynamic regulation of the 20S proteasome proteolysis activity. Its function is as follows. Component of the proteasome core, a large protease complex with broad specificity involved in protein degradation. The polypeptide is Proteasome subunit beta (Mycobacterium avium (strain 104)).